Reading from the N-terminus, the 351-residue chain is Large ribosomal subunit protein uL3 (351 aa).

Disordered regions lie at residues 1-31 and 246-271; these read MGHR…TPRT and KGSR…GQLG.

The protein belongs to the universal ribosomal protein uL3 family. Part of the 50S ribosomal subunit. Forms a cluster with proteins L14 and L24e.

One of the primary rRNA binding proteins, it binds directly near the 3'-end of the 23S rRNA, where it nucleates assembly of the 50S subunit. The sequence is that of Large ribosomal subunit protein uL3 from Saccharolobus islandicus (strain Y.N.15.51 / Yellowstone #2) (Sulfolobus islandicus).